We begin with the raw amino-acid sequence, 202 residues long: Putative pituitary tumor-transforming gene 3 protein (202 aa).

Residues 61-64 (RKAL) carry the D-box motif. The interval 67 to 92 (VNRATEKSVKTNGPLKQKQPSFSAKK) is disordered. The SH3-binding signature appears at 163 to 173 (PPLPLKMPSPP).

It belongs to the securin family.

It is found in the cytoplasm. It localises to the nucleus. The protein is Putative pituitary tumor-transforming gene 3 protein (PTTG3) of Pongo pygmaeus (Bornean orangutan).